Here is a 756-residue protein sequence, read N- to C-terminus: Hormone-sensitive lipase (756 aa).

The short motif at His-350–Gly-352 is the Involved in the stabilization of the negatively charged intermediate by the formation of the oxyanion hole element. Residue Ser-424 is part of the active site. Disordered stretches follow at residues Ser-542 to Leu-570 and Arg-581 to Gly-600. Ser-552 is subject to Phosphoserine; by PKA. Residue Ser-554 is modified to Phosphoserine; by AMPK. The span at Arg-581 to Ala-596 shows a compositional bias: polar residues. 2 positions are modified to phosphoserine: Ser-595 and Ser-649. Residues Asp-692 and His-722 contribute to the active site.

This sequence belongs to the 'GDXG' lipolytic enzyme family. Monomer and homodimer. Interacts with CAVIN1 in the adipocyte cytoplasm. Interacts with PLIN5. Phosphorylation by AMPK reduces its translocation towards the lipid droplets.

The protein resides in the cell membrane. It is found in the membrane. It localises to the caveola. Its subcellular location is the cytoplasm. The protein localises to the cytosol. The protein resides in the lipid droplet. It carries out the reaction a diacylglycerol + H2O = a monoacylglycerol + a fatty acid + H(+). It catalyses the reaction a triacylglycerol + H2O = a diacylglycerol + a fatty acid + H(+). The catalysed reaction is a monoacylglycerol + H2O = glycerol + a fatty acid + H(+). The enzyme catalyses Hydrolyzes glycerol monoesters of long-chain fatty acids.. It carries out the reaction 1,2-di-(9Z-octadecenoyl)-glycerol + (9Z)-octadecenoate + H(+) = 1,2,3-tri-(9Z-octadecenoyl)-glycerol + H2O. It catalyses the reaction 2,3-di-(9Z)-octadecenoyl-sn-glycerol + H2O = 2-(9Z-octadecenoyl)-glycerol + (9Z)-octadecenoate + H(+). The catalysed reaction is cholesteryl (9Z-octadecenoate) + H2O = cholesterol + (9Z)-octadecenoate + H(+). The enzyme catalyses 1,2,3-tri-(9Z-octadecenoyl)-glycerol + H2O = di-(9Z)-octadecenoylglycerol + (9Z)-octadecenoate + H(+). It carries out the reaction all-trans-retinyl hexadecanoate + H2O = all-trans-retinol + hexadecanoate + H(+). It catalyses the reaction 1,2-di-(9Z-octadecenoyl)-glycerol + H2O = (9Z-octadecenoyl)-glycerol + (9Z)-octadecenoate + H(+). The catalysed reaction is 2-(5Z,8Z,11Z,14Z-eicosatetraenoyl)-glycerol + H2O = glycerol + (5Z,8Z,11Z,14Z)-eicosatetraenoate + H(+). The enzyme catalyses 1-(9Z-octadecenoyl)-glycerol + H2O = glycerol + (9Z)-octadecenoate + H(+). It carries out the reaction 2-(9Z-octadecenoyl)-glycerol + H2O = glycerol + (9Z)-octadecenoate + H(+). It catalyses the reaction 1-O-hexadecyl-2-acetyl-sn-glycerol + H2O = 1-O-hexadecyl-sn-glycerol + acetate + H(+). The catalysed reaction is 1,2-di-(9Z-octadecenoyl)-sn-glycerol + H2O = (9Z-octadecenoyl)-glycerol + (9Z)-octadecenoate + H(+). The enzyme catalyses 1,3-di-(9Z-octadecenoyl)-glycerol + H2O = 1-(9Z-octadecenoyl)-glycerol + (9Z)-octadecenoate + H(+). It carries out the reaction 1,2-di-(9Z-octadecenoyl)-glycerol + H2O = 2-(9Z-octadecenoyl)-glycerol + (9Z)-octadecenoate + H(+). It functions in the pathway glycerolipid metabolism; triacylglycerol degradation. Its function is as follows. Lipase with broad substrate specificity, catalyzing the hydrolysis of triacylglycerols (TAGs), diacylglycerols (DAGs), monoacylglycerols (MAGs), cholesteryl esters and retinyl esters. Shows a preferential hydrolysis of DAGs over TAGs and MAGs. Preferentially hydrolyzes fatty acid (FA) esters at the sn-3 position of the glycerol backbone in DAGs and FA esters at the sn-1 and sn-2 positions of the glycerol backbone in TAGs. Catalyzes the hydrolysis of 2-arachidonoylglycerol, an endocannabinoid and of 2-acetyl monoalkylglycerol ether, the penultimate precursor of the pathway for de novo synthesis of platelet-activating factor. In adipose tissue and heart, it primarily hydrolyzes stored triglycerides to free fatty acids, while in steroidogenic tissues, it principally converts cholesteryl esters to free cholesterol for steroid hormone production. The chain is Hormone-sensitive lipase (LIPE) from Bos taurus (Bovine).